A 351-amino-acid chain; its full sequence is Uroporphyrinogen decarboxylase (351 aa).

Substrate is bound by residues 25–29 (RQAGR), Asp74, Tyr151, Ser206, and His325.

It belongs to the uroporphyrinogen decarboxylase family. Homodimer.

It localises to the cytoplasm. The catalysed reaction is uroporphyrinogen III + 4 H(+) = coproporphyrinogen III + 4 CO2. Its pathway is porphyrin-containing compound metabolism; protoporphyrin-IX biosynthesis; coproporphyrinogen-III from 5-aminolevulinate: step 4/4. In terms of biological role, catalyzes the decarboxylation of four acetate groups of uroporphyrinogen-III to yield coproporphyrinogen-III. The protein is Uroporphyrinogen decarboxylase of Pelodictyon phaeoclathratiforme (strain DSM 5477 / BU-1).